The chain runs to 404 residues: Formate-dependent phosphoribosylglycinamide formyltransferase (404 aa).

N(1)-(5-phospho-beta-D-ribosyl)glycinamide-binding positions include 25-26 (EL) and Glu-85. ATP-binding positions include Arg-118, Lys-159, 164–169 (SSGKGQ), 199–202 (EGFV), and Glu-207. The ATP-grasp domain maps to 123–318 (RLAAEELGLP…EFELHARAIL (196 aa)). 2 residues coordinate Mg(2+): Glu-277 and Glu-289. N(1)-(5-phospho-beta-D-ribosyl)glycinamide is bound by residues Asp-296, Lys-365, and 372–373 (RR).

This sequence belongs to the PurK/PurT family. Homodimer.

It catalyses the reaction N(1)-(5-phospho-beta-D-ribosyl)glycinamide + formate + ATP = N(2)-formyl-N(1)-(5-phospho-beta-D-ribosyl)glycinamide + ADP + phosphate + H(+). Its pathway is purine metabolism; IMP biosynthesis via de novo pathway; N(2)-formyl-N(1)-(5-phospho-D-ribosyl)glycinamide from N(1)-(5-phospho-D-ribosyl)glycinamide (formate route): step 1/1. Functionally, involved in the de novo purine biosynthesis. Catalyzes the transfer of formate to 5-phospho-ribosyl-glycinamide (GAR), producing 5-phospho-ribosyl-N-formylglycinamide (FGAR). Formate is provided by PurU via hydrolysis of 10-formyl-tetrahydrofolate. The protein is Formate-dependent phosphoribosylglycinamide formyltransferase of Burkholderia cenocepacia (strain HI2424).